A 429-amino-acid chain; its full sequence is Enolase (429 aa).

Position 162 (Gln-162) interacts with (2R)-2-phosphoglycerate. The active-site Proton donor is the Glu-204. Residues Asp-241, Glu-288, and Asp-315 each coordinate Mg(2+). (2R)-2-phosphoglycerate-binding residues include Lys-340, Arg-369, Ser-370, and Lys-391. Lys-340 (proton acceptor) is an active-site residue.

The protein belongs to the enolase family. It depends on Mg(2+) as a cofactor.

Its subcellular location is the cytoplasm. It localises to the secreted. It is found in the cell surface. It carries out the reaction (2R)-2-phosphoglycerate = phosphoenolpyruvate + H2O. The protein operates within carbohydrate degradation; glycolysis; pyruvate from D-glyceraldehyde 3-phosphate: step 4/5. Catalyzes the reversible conversion of 2-phosphoglycerate (2-PG) into phosphoenolpyruvate (PEP). It is essential for the degradation of carbohydrates via glycolysis. The chain is Enolase from Bacteroides fragilis (strain ATCC 25285 / DSM 2151 / CCUG 4856 / JCM 11019 / LMG 10263 / NCTC 9343 / Onslow / VPI 2553 / EN-2).